The primary structure comprises 476 residues: Aspartyl/glutamyl-tRNA(Asn/Gln) amidotransferase subunit B (476 aa).

The protein belongs to the GatB/GatE family. GatB subfamily. As to quaternary structure, heterotrimer of A, B and C subunits.

The enzyme catalyses L-glutamyl-tRNA(Gln) + L-glutamine + ATP + H2O = L-glutaminyl-tRNA(Gln) + L-glutamate + ADP + phosphate + H(+). It catalyses the reaction L-aspartyl-tRNA(Asn) + L-glutamine + ATP + H2O = L-asparaginyl-tRNA(Asn) + L-glutamate + ADP + phosphate + 2 H(+). In terms of biological role, allows the formation of correctly charged Asn-tRNA(Asn) or Gln-tRNA(Gln) through the transamidation of misacylated Asp-tRNA(Asn) or Glu-tRNA(Gln) in organisms which lack either or both of asparaginyl-tRNA or glutaminyl-tRNA synthetases. The reaction takes place in the presence of glutamine and ATP through an activated phospho-Asp-tRNA(Asn) or phospho-Glu-tRNA(Gln). In Oleidesulfovibrio alaskensis (strain ATCC BAA-1058 / DSM 17464 / G20) (Desulfovibrio alaskensis), this protein is Aspartyl/glutamyl-tRNA(Asn/Gln) amidotransferase subunit B.